A 138-amino-acid chain; its full sequence is Histone H2B.8 (138 aa).

Over residues M1–E38 the composition is skewed to basic and acidic residues. Residues M1–K45 are disordered. Residue A2 is modified to N,N,N-trimethylalanine; alternate. A2 bears the N,N-dimethylalanine; alternate mark. An N-methylalanine; alternate modification is found at A2. K4 is subject to N6-methyllysine. An N6-acetyllysine mark is found at K8 and K13. An N6,N6-dimethyllysine modification is found at K14. K18, K23, K29, and K30 each carry N6-acetyllysine. K134 is covalently cross-linked (Glycyl lysine isopeptide (Lys-Gly) (interchain with G-Cter in ubiquitin)).

It belongs to the histone H2B family. The nucleosome is a histone octamer containing two molecules each of H2A, H2B, H3 and H4 assembled in one H3-H4 heterotetramer and two H2A-H2B heterodimers. The octamer wraps approximately 147 bp of DNA. Post-translationally, can be acetylated to form H2BK6ac, H2BK33ac and H2BK34ac. Monoubiquitinated by BRE1 to form H2BK143ub1 and deubiquitinated by UBP26. Required for heterochromatic histone H3 di- and trimethylation at H3K4me. May give a specific tag for epigenetic transcriptional activation.

It is found in the nucleus. The protein resides in the chromosome. Its function is as follows. Core component of nucleosome. Nucleosomes wrap and compact DNA into chromatin, limiting DNA accessibility to the cellular machineries which require DNA as a template. Histones thereby play a central role in transcription regulation, DNA repair, DNA replication and chromosomal stability. DNA accessibility is regulated via a complex set of post-translational modifications of histones, also called histone code, and nucleosome remodeling. This chain is Histone H2B.8, found in Arabidopsis thaliana (Mouse-ear cress).